A 497-amino-acid chain; its full sequence is Aspartyl/glutamyl-tRNA(Asn/Gln) amidotransferase subunit B (497 aa).

Belongs to the GatB/GatE family. GatB subfamily. As to quaternary structure, heterotrimer of A, B and C subunits.

The enzyme catalyses L-glutamyl-tRNA(Gln) + L-glutamine + ATP + H2O = L-glutaminyl-tRNA(Gln) + L-glutamate + ADP + phosphate + H(+). It catalyses the reaction L-aspartyl-tRNA(Asn) + L-glutamine + ATP + H2O = L-asparaginyl-tRNA(Asn) + L-glutamate + ADP + phosphate + 2 H(+). Allows the formation of correctly charged Asn-tRNA(Asn) or Gln-tRNA(Gln) through the transamidation of misacylated Asp-tRNA(Asn) or Glu-tRNA(Gln) in organisms which lack either or both of asparaginyl-tRNA or glutaminyl-tRNA synthetases. The reaction takes place in the presence of glutamine and ATP through an activated phospho-Asp-tRNA(Asn) or phospho-Glu-tRNA(Gln). This chain is Aspartyl/glutamyl-tRNA(Asn/Gln) amidotransferase subunit B, found in Novosphingobium aromaticivorans (strain ATCC 700278 / DSM 12444 / CCUG 56034 / CIP 105152 / NBRC 16084 / F199).